The following is a 107-amino-acid chain: Putative double-stranded DNA mimic protein YE2228 (107 aa).

This sequence belongs to the putative dsDNA mimic protein family.

Functionally, may act as a double-stranded DNA (dsDNA) mimic. Probably regulates the activity of a dsDNA-binding protein. This chain is Putative double-stranded DNA mimic protein YE2228, found in Yersinia enterocolitica serotype O:8 / biotype 1B (strain NCTC 13174 / 8081).